The following is a 199-amino-acid chain: Pyridoxine/pyridoxamine 5'-phosphate oxidase (199 aa).

FMN contacts are provided by residues 45-50 (RVVLLK), 60-61 (FT), R66, K67, and Q89. Residue K50 participates in substrate binding. 3 residues coordinate substrate: Y107, R111, and S115. FMN contacts are provided by residues 124–125 (QS) and W169. 175–177 (RIH) is a substrate binding site. R179 lines the FMN pocket.

This sequence belongs to the pyridoxamine 5'-phosphate oxidase family. Homodimer. The cofactor is FMN.

It catalyses the reaction pyridoxamine 5'-phosphate + O2 + H2O = pyridoxal 5'-phosphate + H2O2 + NH4(+). It carries out the reaction pyridoxine 5'-phosphate + O2 = pyridoxal 5'-phosphate + H2O2. It functions in the pathway cofactor metabolism; pyridoxal 5'-phosphate salvage; pyridoxal 5'-phosphate from pyridoxamine 5'-phosphate: step 1/1. Its pathway is cofactor metabolism; pyridoxal 5'-phosphate salvage; pyridoxal 5'-phosphate from pyridoxine 5'-phosphate: step 1/1. Functionally, catalyzes the oxidation of either pyridoxine 5'-phosphate (PNP) or pyridoxamine 5'-phosphate (PMP) into pyridoxal 5'-phosphate (PLP). The polypeptide is Pyridoxine/pyridoxamine 5'-phosphate oxidase (Ehrlichia chaffeensis (strain ATCC CRL-10679 / Arkansas)).